The chain runs to 118 residues: Large ribosomal subunit protein uL22 (118 aa).

It belongs to the universal ribosomal protein uL22 family. In terms of assembly, part of the 50S ribosomal subunit.

Its function is as follows. This protein binds specifically to 23S rRNA; its binding is stimulated by other ribosomal proteins, e.g. L4, L17, and L20. It is important during the early stages of 50S assembly. It makes multiple contacts with different domains of the 23S rRNA in the assembled 50S subunit and ribosome. The globular domain of the protein is located near the polypeptide exit tunnel on the outside of the subunit, while an extended beta-hairpin is found that lines the wall of the exit tunnel in the center of the 70S ribosome. This is Large ribosomal subunit protein uL22 from Treponema denticola (strain ATCC 35405 / DSM 14222 / CIP 103919 / JCM 8153 / KCTC 15104).